The sequence spans 239 residues: Cysteine-rich venom protein natrin-1 (239 aa).

An N-terminal signal peptide occupies residues 1-18 (MIAFSLLCFAAVLQQSFG). The region spanning 37 to 165 (VDLHNSLRRR…AWSYFYVCQY (129 aa)) is the SCP domain. 8 cysteine pairs are disulfide-bonded: cysteine 74–cysteine 152, cysteine 91–cysteine 166, cysteine 147–cysteine 163, cysteine 185–cysteine 192, cysteine 188–cysteine 197, cysteine 201–cysteine 234, cysteine 210–cysteine 228, and cysteine 219–cysteine 232. The 34-residue stretch at 201–234 (CTIYNKLTNCDSLLKQSSCQDDWIKSNCPASCFC) folds into the ShKT domain.

In terms of tissue distribution, expressed by the venom gland.

Its subcellular location is the secreted. Its function is as follows. Inhibits calcium-activated potassium channels (KCa1.1/KCNMA1), voltage-gated potassium channel Kv1.3/KCNA3, and the calcium release channel/ryanodine receptor (RyR). Binds specifically to type 1 RyR (RyR1) from skeletal muscle. Inhibit both the binding of ryanodine to RyR1, and RyR1's calcium-channel activity. Inhibits carbachol-induced muscle contraction and weakly blocks muscle contraction evoked by potassium. The sequence is that of Cysteine-rich venom protein natrin-1 from Naja atra (Chinese cobra).